A 454-amino-acid chain; its full sequence is Pup--protein ligase (454 aa).

Glutamate 9 contacts Mg(2+). Arginine 53 lines the ATP pocket. Tyrosine 55 provides a ligand contact to Mg(2+). Aspartate 57 functions as the Proton acceptor in the catalytic mechanism. Glutamate 63 provides a ligand contact to Mg(2+). The ATP site is built by threonine 66 and tryptophan 420.

This sequence belongs to the Pup ligase/Pup deamidase family. Pup-conjugating enzyme subfamily.

The catalysed reaction is ATP + [prokaryotic ubiquitin-like protein]-L-glutamate + [protein]-L-lysine = ADP + phosphate + N(6)-([prokaryotic ubiquitin-like protein]-gamma-L-glutamyl)-[protein]-L-lysine.. It functions in the pathway protein degradation; proteasomal Pup-dependent pathway. It participates in protein modification; protein pupylation. Catalyzes the covalent attachment of the prokaryotic ubiquitin-like protein modifier Pup to the proteasomal substrate proteins, thereby targeting them for proteasomal degradation. This tagging system is termed pupylation. The ligation reaction involves the side-chain carboxylate of the C-terminal glutamate of Pup and the side-chain amino group of a substrate lysine. This is Pup--protein ligase from Pseudarthrobacter chlorophenolicus (strain ATCC 700700 / DSM 12829 / CIP 107037 / JCM 12360 / KCTC 9906 / NCIMB 13794 / A6) (Arthrobacter chlorophenolicus).